Consider the following 504-residue polypeptide: Cobyric acid synthase (504 aa).

In terms of domain architecture, GATase cobBQ-type spans 251 to 448 (DITIAIVQLP…LHGLFDSDAF (198 aa)). Cys332 acts as the Nucleophile in catalysis. Residue His440 is part of the active site.

The protein belongs to the CobB/CobQ family. CobQ subfamily.

It participates in cofactor biosynthesis; adenosylcobalamin biosynthesis. In terms of biological role, catalyzes amidations at positions B, D, E, and G on adenosylcobyrinic A,C-diamide. NH(2) groups are provided by glutamine, and one molecule of ATP is hydrogenolyzed for each amidation. This is Cobyric acid synthase from Salmonella gallinarum (strain 287/91 / NCTC 13346).